A 602-amino-acid chain; its full sequence is Transcription factor COE4 (602 aa).

Residues 64 to 67 (RKSN) are interaction with DNA. The C5-type zinc-finger motif lies at 152-171 (CRVLLTHEIMCSRCCDRKSC). 2 interaction with DNA regions span residues 198–205 (NCLKNAGN) and 237–240 (NNSK). Residues 256–338 (PCIKAISPGE…CKGCPGRFVY (83 aa)) form the IPT/TIG domain. 2 disordered regions span residues 448–476 (PEPG…SGYG) and 558–602 (PVLR…LAYS). Over residues 560 to 569 (LRPPSSPPQA) the composition is skewed to pro residues.

This sequence belongs to the COE family. In terms of assembly, forms either a homodimer or a heterodimer with a related family member. Interacts with MAPK3/ERK1. Interacts with STAT5A. As to expression, most highly expressed in cytotoxic NK cells, especially CD16(+) NK cells, followed by CD8(+) T-cells.

The protein localises to the nucleus. In terms of biological role, transcription factor. Binds to specific sequence motif 5'-CCCNNG[GA]G-3' in regulatory elements of putative target immunoregulatory genes such as NKG7, GZMA, and TBX21. Positively modulates transcription of NKG7. May play a role in regulating FAS/CD95-mediated apoptosis in cytotoxic NK cells and T-cells, probably downstream of interleukin IL2 signaling. The sequence is that of Transcription factor COE4 (EBF4) from Homo sapiens (Human).